The following is a 178-amino-acid chain: Cytochrome b6-f complex subunit 4 (178 aa).

The next 3 helical transmembrane spans lie at 36–56 (LSYI…GLAV), 95–115 (LLGV…PFLE), and 131–151 (TVSL…ALPI).

This sequence belongs to the cytochrome b family. PetD subfamily. As to quaternary structure, the 4 large subunits of the cytochrome b6-f complex are cytochrome b6, subunit IV (17 kDa polypeptide, petD), cytochrome f and the Rieske protein, while the 4 small subunits are petG, petL, petM and petN. The complex functions as a dimer.

Its subcellular location is the plastid. The protein localises to the chloroplast thylakoid membrane. Its function is as follows. Component of the cytochrome b6-f complex, which mediates electron transfer between photosystem II (PSII) and photosystem I (PSI), cyclic electron flow around PSI, and state transitions. In Picea abies (Norway spruce), this protein is Cytochrome b6-f complex subunit 4.